We begin with the raw amino-acid sequence, 592 residues long: Aspartate--tRNA ligase (592 aa).

Glutamate 171 is a binding site for L-aspartate. The tract at residues 195-198 is aspartate; it reads QLFK. Arginine 217 contacts L-aspartate. ATP contacts are provided by residues 217 to 219 and glutamine 226; that span reads RDE. Histidine 448 is a binding site for L-aspartate. Residue glutamate 482 participates in ATP binding. Arginine 489 is an L-aspartate binding site. 534-537 provides a ligand contact to ATP; sequence GLDR.

It belongs to the class-II aminoacyl-tRNA synthetase family. Type 1 subfamily. In terms of assembly, homodimer.

The protein resides in the cytoplasm. It catalyses the reaction tRNA(Asp) + L-aspartate + ATP = L-aspartyl-tRNA(Asp) + AMP + diphosphate. Catalyzes the attachment of L-aspartate to tRNA(Asp) in a two-step reaction: L-aspartate is first activated by ATP to form Asp-AMP and then transferred to the acceptor end of tRNA(Asp). The polypeptide is Aspartate--tRNA ligase (Vibrio vulnificus (strain CMCP6)).